Here is a 114-residue protein sequence, read N- to C-terminus: NADH-ubiquinone oxidoreductase chain 3 (114 aa).

3 helical membrane-spanning segments follow: residues 3–23 (LITLIIMAMAMTTALYTINTY), 52–72 (IQFFLVAILFILFDLEIVLLL), and 86–106 (TILLITMLLTILTLGLLYEWL).

The protein belongs to the complex I subunit 3 family.

It is found in the mitochondrion membrane. The catalysed reaction is a ubiquinone + NADH + 5 H(+)(in) = a ubiquinol + NAD(+) + 4 H(+)(out). Its function is as follows. Core subunit of the mitochondrial membrane respiratory chain NADH dehydrogenase (Complex I) that is believed to belong to the minimal assembly required for catalysis. Complex I functions in the transfer of electrons from NADH to the respiratory chain. The immediate electron acceptor for the enzyme is believed to be ubiquinone. The sequence is that of NADH-ubiquinone oxidoreductase chain 3 (MT-ND3) from Lycodon semicarinatus (Ryukyu odd-tooth snake).